Reading from the N-terminus, the 61-residue chain is Potassium channel toxin alpha-KTx 15.6 (61 aa).

A signal peptide spans 1–23 (MKAFYGMLVIFILCSTCYISVDS). Gln-24 is modified (pyrrolidone carboxylic acid). 3 disulfide bridges follow: Cys-31-Cys-52, Cys-37-Cys-57, and Cys-41-Cys-59.

The protein belongs to the short scorpion toxin superfamily. Potassium channel inhibitor family. Alpha-KTx 15 subfamily. As to expression, expressed by the venom gland.

The protein resides in the secreted. Functionally, irreversibly blocks the A-type voltage-gated potassium channels in rat cerebellum granular cells (190 nM induce 50% inhibitory effect) (IC(50)=190 nM). Also weakly inhibits Kv1.2/KCNA2 and Kv1.3/KCNA3. This Tityus discrepans (Venezuelan scorpion) protein is Potassium channel toxin alpha-KTx 15.6.